A 225-amino-acid polypeptide reads, in one-letter code: Glutathione S-transferase Mu 5 (225 aa).

Residues 5–92 (KSMVLGYWDI…YIARKHNMCG (88 aa)) enclose the GST N-terminal domain. Serine 6 is subject to Phosphoserine. Glutathione is bound by residues 11-12 (YW), 50-54 (WLDVK), 63-64 (NL), and 76-77 (QS). Residues 94 to 212 (TEEEKIRVDI…QSDRCFKMPI (119 aa)) enclose the GST C-terminal domain. Tyrosine 120 contacts substrate.

It belongs to the GST superfamily. Mu family. Homodimer. Post-translationally, the N-terminus is blocked. Expressed in testis and brain. Very low expression in liver, kidney, heart and lung.

Its subcellular location is the cytoplasm. It carries out the reaction RX + glutathione = an S-substituted glutathione + a halide anion + H(+). Conjugation of reduced glutathione to a wide number of exogenous and endogenous hydrophobic electrophiles. This chain is Glutathione S-transferase Mu 5 (Gstm5), found in Rattus norvegicus (Rat).